The chain runs to 154 residues: Myoglobin (154 aa).

Positions Gly-2–Lys-148 constitute a Globin domain. Ser-4 bears the Phosphoserine mark. Nitrite is bound at residue His-65. Residue His-65 participates in O2 binding. Thr-68 carries the phosphothreonine modification. Heme b is bound at residue His-94.

The protein belongs to the globin family. Monomeric.

Its subcellular location is the cytoplasm. It localises to the sarcoplasm. The enzyme catalyses Fe(III)-heme b-[protein] + nitric oxide + H2O = Fe(II)-heme b-[protein] + nitrite + 2 H(+). It catalyses the reaction H2O2 + AH2 = A + 2 H2O. Monomeric heme protein which primary function is to store oxygen and facilitate its diffusion within muscle tissues. Reversibly binds oxygen through a pentacoordinated heme iron and enables its timely and efficient release as needed during periods of heightened demand. Depending on the oxidative conditions of tissues and cells, and in addition to its ability to bind oxygen, it also has a nitrite reductase activity whereby it regulates the production of bioactive nitric oxide. Under stress conditions, like hypoxia and anoxia, it also protects cells against reactive oxygen species thanks to its pseudoperoxidase activity. This Bos mutus grunniens (Wild yak) protein is Myoglobin (MB).